The primary structure comprises 423 residues: UPF0229 protein PSPTO_0546 (423 aa).

Residues 65-110 form a disordered region; it reads HHGRGGKQTVVHPGNKEFTTGEHIARPQGGAGGKGPGKAGNSGEGM. A compositionally biased stretch (gly residues) spans 93-107; that stretch reads GGAGGKGPGKAGNSG.

It belongs to the UPF0229 family.

This Pseudomonas syringae pv. tomato (strain ATCC BAA-871 / DC3000) protein is UPF0229 protein PSPTO_0546.